Consider the following 668-residue polypeptide: Fructose-1,6-bisphosphatase class 3 (668 aa).

It belongs to the FBPase class 3 family. Requires Mn(2+) as cofactor.

It carries out the reaction beta-D-fructose 1,6-bisphosphate + H2O = beta-D-fructose 6-phosphate + phosphate. The protein operates within carbohydrate biosynthesis; gluconeogenesis. The chain is Fructose-1,6-bisphosphatase class 3 from Clostridium botulinum (strain Langeland / NCTC 10281 / Type F).